Reading from the N-terminus, the 420-residue chain is Probable endo-beta-1,4-glucanase celB (420 aa).

Positions 1-18 are cleaved as a signal peptide; that stretch reads MLRKLTPLALALLPLVAG. N118 is a glycosylation site (N-linked (GlcNAc...) asparagine). The Nucleophile role is filled by E215. E220 acts as the Proton donor in catalysis. N-linked (GlcNAc...) asparagine glycosylation is found at N234, N293, and N383.

Belongs to the glycosyl hydrolase 7 (cellulase C) family.

It localises to the secreted. The enzyme catalyses Endohydrolysis of (1-&gt;4)-beta-D-glucosidic linkages in cellulose, lichenin and cereal beta-D-glucans.. Has endoglucanase activity on substrates containing beta-1,4 glycosidic bonds, like in carboxymethylcellulose (CMC), hydroxyethylcellulose (HEC) and beta-glucan. Involved in the degradation of complex natural cellulosic substrates. This chain is Probable endo-beta-1,4-glucanase celB (celB), found in Aspergillus terreus (strain NIH 2624 / FGSC A1156).